A 399-amino-acid polypeptide reads, in one-letter code: Phosphoglycerate kinase (399 aa).

Residues 22 to 24 (DFN), Arg-38, 61 to 64 (HLGR), Arg-120, and Arg-153 contribute to the substrate site. ATP-binding positions include Lys-204, Glu-326, and 352–355 (GGDT).

It belongs to the phosphoglycerate kinase family. As to quaternary structure, monomer.

The protein resides in the cytoplasm. The catalysed reaction is (2R)-3-phosphoglycerate + ATP = (2R)-3-phospho-glyceroyl phosphate + ADP. It participates in carbohydrate degradation; glycolysis; pyruvate from D-glyceraldehyde 3-phosphate: step 2/5. In Citrifermentans bemidjiense (strain ATCC BAA-1014 / DSM 16622 / JCM 12645 / Bem) (Geobacter bemidjiensis), this protein is Phosphoglycerate kinase.